The sequence spans 108 residues: uncharacterized protein (108 aa).

The signal sequence occupies residues 1-21 (MFRSLFLAAALMAFTPLAANA).

This sequence to E.coli YaaX.

This is an uncharacterized protein from Escherichia coli O157:H7.